We begin with the raw amino-acid sequence, 106 residues long: Large ribosomal subunit protein uL24 (106 aa).

Belongs to the universal ribosomal protein uL24 family. In terms of assembly, part of the 50S ribosomal subunit.

Its function is as follows. One of two assembly initiator proteins, it binds directly to the 5'-end of the 23S rRNA, where it nucleates assembly of the 50S subunit. In terms of biological role, one of the proteins that surrounds the polypeptide exit tunnel on the outside of the subunit. The polypeptide is Large ribosomal subunit protein uL24 (Verminephrobacter eiseniae (strain EF01-2)).